The following is a 199-amino-acid chain: Recombination protein RecR (199 aa).

A C4-type zinc finger spans residues 57 to 72 (CPICGNITEKEVCDIC). Positions 80–176 (TTIMVVEQPK…KVTRLAAGLS (97 aa)) constitute a Toprim domain.

Belongs to the RecR family.

Its function is as follows. May play a role in DNA repair. It seems to be involved in an RecBC-independent recombinational process of DNA repair. It may act with RecF and RecO. This Lactobacillus helveticus (strain DPC 4571) protein is Recombination protein RecR.